The chain runs to 460 residues: Asparagine--tRNA ligase (460 aa).

This sequence belongs to the class-II aminoacyl-tRNA synthetase family. Homodimer.

It is found in the cytoplasm. The catalysed reaction is tRNA(Asn) + L-asparagine + ATP = L-asparaginyl-tRNA(Asn) + AMP + diphosphate + H(+). In Picosynechococcus sp. (strain ATCC 27264 / PCC 7002 / PR-6) (Agmenellum quadruplicatum), this protein is Asparagine--tRNA ligase.